The chain runs to 186 residues: Large ribosomal subunit protein uL15 (186 aa).

Positions methionine 1–valine 48 are disordered. Over residues arginine 21 to asparagine 35 the composition is skewed to gly residues.

It belongs to the universal ribosomal protein uL15 family. In terms of assembly, part of the 50S ribosomal subunit.

Its function is as follows. Binds to the 23S rRNA. The protein is Large ribosomal subunit protein uL15 of Chlorobaculum tepidum (strain ATCC 49652 / DSM 12025 / NBRC 103806 / TLS) (Chlorobium tepidum).